A 125-amino-acid polypeptide reads, in one-letter code: UPF0102 protein PBPRA3228 (125 aa).

Belongs to the UPF0102 family.

This chain is UPF0102 protein PBPRA3228, found in Photobacterium profundum (strain SS9).